A 574-amino-acid chain; its full sequence is K(+)/H(+) antiporter NhaP2 (574 aa).

The next 13 helical transmembrane spans lie at isoleucine 6–valine 26, isoleucine 34–leucine 54, tyrosine 58–methionine 78, valine 87–threonine 107, valine 109–valine 129, isoleucine 173–isoleucine 193, phenylalanine 196–leucine 216, leucine 219–serine 239, leucine 242–threonine 262, valine 271–leucine 291, isoleucine 299–valine 319, tryptophan 335–methionine 355, and leucine 359–valine 379. One can recognise an RCK C-terminal domain in the interval serine 405–glutamine 486.

The protein belongs to the monovalent cation:proton antiporter 1 (CPA1) transporter (TC 2.A.36) family. NhaP2 subfamily.

It is found in the cell inner membrane. It carries out the reaction K(+)(in) + H(+)(out) = K(+)(out) + H(+)(in). Functionally, k(+)/H(+) antiporter that extrudes potassium in exchange for external protons and maintains the internal concentration of potassium under toxic levels. The polypeptide is K(+)/H(+) antiporter NhaP2 (Shewanella sp. (strain MR-7)).